A 223-amino-acid chain; its full sequence is N-terminal Xaa-Pro-Lys N-methyltransferase 1 (223 aa).

At Met1 the chain carries N-acetylmethionine. Thr2 is subject to N-acetylthreonine; in N-terminal Xaa-Pro-Lys N-methyltransferase 1, N-terminally processed. Residues Gly69, Arg74, 91–93 (DVT), 119–120 (LQ), and Gln135 contribute to the S-adenosyl-L-methionine site.

This sequence belongs to the methyltransferase superfamily. NTM1 family.

The protein resides in the nucleus. It catalyses the reaction N-terminal L-alanyl-L-prolyl-L-lysyl-[protein] + 3 S-adenosyl-L-methionine = N-terminal N,N,N-trimethyl-L-alanyl-L-prolyl-L-lysyl-[protein] + 3 S-adenosyl-L-homocysteine + 3 H(+). It carries out the reaction N-terminal L-seryl-L-prolyl-L-lysyl-[protein] + 3 S-adenosyl-L-methionine = N-terminal N,N,N-trimethyl-L-seryl-L-prolyl-L-lysyl-[protein] + 3 S-adenosyl-L-homocysteine + 3 H(+). The catalysed reaction is N-terminal L-prolyl-L-prolyl-L-lysyl-[protein] + 2 S-adenosyl-L-methionine = N-terminal N,N-dimethyl-L-prolyl-L-prolyl-L-lysyl-[protein] + 2 S-adenosyl-L-homocysteine + 2 H(+). Its function is as follows. Distributive alpha-N-methyltransferase that methylates the N-terminus of target proteins containing the N-terminal motif [Ala/Gly/Pro/Ser]-Pro-Lys when the initiator Met is cleaved. Specifically catalyzes mono-, di- or tri-methylation of the exposed alpha-amino group of the Ala, Gly or Ser residue in the [Ala/Gly/Ser]-Pro-Lys motif and mono- or di-methylation of Pro in the Pro-Pro-Lys motif. Some of the substrates may be primed by NTMT2-mediated monomethylation. Catalyzes the trimethylation of the N-terminal Gly in CENPA (after removal of Met-1). Responsible for the N-terminal methylation of KLHL31, MYL2, MYL3, RB1, RCC1, RPL23A and SET. Required during mitosis for normal bipolar spindle formation and chromosome segregation via its action on RCC1. The sequence is that of N-terminal Xaa-Pro-Lys N-methyltransferase 1 (NTMT1) from Ailuropoda melanoleuca (Giant panda).